A 236-amino-acid chain; its full sequence is V-set and transmembrane domain-containing protein 1 (236 aa).

Positions 1 to 16 are cleaved as a signal peptide; that stretch reads MTAEFLSLLCLGLCLG. The Extracellular segment spans residues 17-135; that stretch reads YEDEKKNEKP…APSMKTDTRT (119 aa). The region spanning 27–114 is the Ig-like V-type domain; sequence PKPSLHAWPS…EWSESSEHLQ (88 aa). 2 N-linked (GlcNAc...) asparagine glycosylation sites follow: Asn-44 and Asn-55. Cys-49 and Cys-96 are joined by a disulfide. A helical membrane pass occupies residues 136 to 156; that stretch reads IFVAIFSCISILLLFLSVFII. Residues 157–236 lie on the Cytoplasmic side of the membrane; it reads YRCSQHSSSS…GSHEYAALKV (80 aa). The disordered stretch occupies residues 166-200; sequence SEESTKRTSHSKLPEQEAAEADLSNMERVSLSTAD. 2 short sequence motifs (ITIM motif) span residues 204–209 and 229–234; these read VTYAEL and HEYAAL. The tract at residues 215–236 is disordered; that stretch reads SEAASDTTQEPPGSHEYAALKV.

Post-translationally, isoform 2 is N-glycosylated. As to expression, expressed on myeloid (neutrophils, eosinophils and monocytes) but not on lymphoid cells.

It is found in the membrane. It localises to the secreted. Functionally, behaves as a cytokine, promoting IL17A secretion by CD4+ T-cells, and differentiation and activation of IL17 producing helper T-cells (TH17). Inhibitory immune receptor involved in the regulation of phagocytes. The sequence is that of V-set and transmembrane domain-containing protein 1 (VSTM1) from Homo sapiens (Human).